The following is a 498-amino-acid chain: ATP synthase subunit beta, chloroplastic (498 aa).

ATP is bound at residue 172-179 (GGAGVGKT).

The protein belongs to the ATPase alpha/beta chains family. F-type ATPases have 2 components, CF(1) - the catalytic core - and CF(0) - the membrane proton channel. CF(1) has five subunits: alpha(3), beta(3), gamma(1), delta(1), epsilon(1). CF(0) has four main subunits: a(1), b(1), b'(1) and c(9-12).

Its subcellular location is the plastid. The protein localises to the chloroplast thylakoid membrane. The catalysed reaction is ATP + H2O + 4 H(+)(in) = ADP + phosphate + 5 H(+)(out). Its function is as follows. Produces ATP from ADP in the presence of a proton gradient across the membrane. The catalytic sites are hosted primarily by the beta subunits. The polypeptide is ATP synthase subunit beta, chloroplastic (Populus trichocarpa (Western balsam poplar)).